The sequence spans 504 residues: Fibroblast growth factor receptor-like 1 (504 aa).

The N-terminal stretch at 1-24 is a signal peptide; that stretch reads MTPSPLLLLLLPPLLLGAFPPAAA. The Extracellular portion of the chain corresponds to 25-378; it reads ARGPPKMADK…SSSATSLPWP (354 aa). The Ig-like C2-type 1 domain occupies 29-115; the sequence is PKMADKVVPR…GSLSVNYTLV (87 aa). A disulfide bond links cysteine 51 and cysteine 99. An N-linked (GlcNAc...) asparagine glycan is attached at asparagine 111. The segment at 123-155 is disordered; the sequence is GKESLGPDSSSGGQEDPASQQWARPRFTQPSKM. Over residues 129–144 the composition is skewed to polar residues; it reads PDSSSGGQEDPASQQW. 2 consecutive Ig-like C2-type domains span residues 147 to 237 and 246 to 354; these read PRFT…YKVD and PVLT…AFLT. Cysteine 172 and cysteine 221 are oxidised to a cystine. Residues asparagine 231, asparagine 255, and asparagine 293 are each glycosylated (N-linked (GlcNAc...) asparagine). A disulfide bridge connects residues cysteine 268 and cysteine 338. A helical membrane pass occupies residues 379 to 399; the sequence is VVIGIPAGAVFILGTLLLWLC. Residues 400-504 lie on the Cytoplasmic side of the membrane; it reads QAQKKPCTPA…KVHQHIHYQC (105 aa). The segment covering 407 to 418 has biased composition (pro residues); the sequence is TPAPAPPLPGHR. The segment at 407 to 435 is disordered; that stretch reads TPAPAPPLPGHRPPGTARDRSGDKDLPSL. Basic and acidic residues predominate over residues 423–432; that stretch reads ARDRSGDKDL.

As to quaternary structure, interacts with FGF2 with a low affinity. Expressed preferentially in cartilaginous tissues and pancreas. Highly expressed in the liver, kidney, heart, brain and skeletal muscle. Weakly expressed in the lung, small intestine and spleen.

The protein localises to the membrane. Its function is as follows. Has a negative effect on cell proliferation. This Homo sapiens (Human) protein is Fibroblast growth factor receptor-like 1 (FGFRL1).